The sequence spans 344 residues: Deoxyhypusine hydroxylase (344 aa).

2 HEAT-like PBS-type repeats span residues 81–107 and 115–140; these read LKHE…VLED and RHEA…FRDR. Positions 83, 84, 116, and 117 each coordinate Fe cation. Positions 169-188 are disordered; it reads EKLRASDFSSVDPAPPTAQG. HEAT-like PBS-type repeat units follow at residues 210-240, 248-274, and 281-308; these read KRYR…LAKG, FRHE…ALSN, and VRHE…FLHD. 4 residues coordinate Fe cation: His-250, Glu-251, His-283, and Glu-284.

Belongs to the deoxyhypusine hydroxylase family. It depends on Fe(2+) as a cofactor.

The protein resides in the cytoplasm. Its subcellular location is the nucleus. The catalysed reaction is [eIF5A protein]-deoxyhypusine + AH2 + O2 = [eIF5A protein]-hypusine + A + H2O. It participates in protein modification; eIF5A hypusination. In terms of biological role, catalyzes the hydroxylation of the N(6)-(4-aminobutyl)-L-lysine intermediate to form hypusine, an essential post-translational modification only found in mature eIF-5A factor. The chain is Deoxyhypusine hydroxylase from Chaetomium globosum (strain ATCC 6205 / CBS 148.51 / DSM 1962 / NBRC 6347 / NRRL 1970) (Soil fungus).